The following is a 170-amino-acid chain: UPF0260 protein RPC_1790 (170 aa).

The protein belongs to the UPF0260 family.

This Rhodopseudomonas palustris (strain BisB18) protein is UPF0260 protein RPC_1790.